A 103-amino-acid polypeptide reads, in one-letter code: Histone H4 (103 aa).

A compositionally biased stretch (gly residues) spans 1 to 14 (MSGRGKGGKGLGKG). The interval 1–20 (MSGRGKGGKGLGKGGAKRHR) is disordered. Ser2 carries the post-translational modification N-acetylserine. Residues Lys6 and Lys13 each carry the N6-acetyl-N6-methyllysine; alternate modification. Residues 17–21 (KRHRK) mediate DNA binding. Lys21 is modified (N6-methyllysine).

The protein belongs to the histone H4 family. The nucleosome is a histone octamer containing two molecules each of H2A, H2B, H3 and H4 assembled in one H3-H4 heterotetramer and two H2A-H2B heterodimers. The octamer wraps approximately 147 bp of DNA.

The protein localises to the nucleus. It localises to the chromosome. Its function is as follows. Core component of nucleosome. Nucleosomes wrap and compact DNA into chromatin, limiting DNA accessibility to the cellular machineries which require DNA as a template. Histones thereby play a central role in transcription regulation, DNA repair, DNA replication and chromosomal stability. DNA accessibility is regulated via a complex set of post-translational modifications of histones, also called histone code, and nucleosome remodeling. The sequence is that of Histone H4 from Solaster stimpsoni (Striped sun sea star).